Here is a 1091-residue protein sequence, read N- to C-terminus: Sodium/potassium exporting P-type ATPase 1 (1091 aa).

The Cytoplasmic segment spans residues 1-63 (MGEGTTKENN…LGDDTKIDYK (63 aa)). A helical transmembrane segment spans residues 64-84 (AMVLHQVCNAMIMVLLISMII). Topologically, residues 85 to 90 (SFAMHD) are extracellular. The chain crosses the membrane as a helical span at residues 91–111 (WITGGVISFVIAVNVLIGLVQ). The Cytoplasmic portion of the chain corresponds to 112–282 (EYKATKTMNS…TNVGTPLHRK (171 aa)). Residues 283–303 (LSKLAVLLFWIAVLFAIIVMA) form a helical membrane-spanning segment. Topologically, residues 304–312 (SQKFDVDKR) are extracellular. A helical membrane pass occupies residues 313–333 (VAIYAICVALSMIPSSLVVVL). At 334–815 (TITMSVGAAV…RRMTDNIQKF (482 aa)) the chain is on the cytoplasmic side. Asp369 serves as the catalytic 4-aspartylphosphate intermediate. The Mg(2+) site is built by Asp369 and Thr371. Residues Thr371 and Glu483 each coordinate ATP. The tract at residues 499-525 (ALTGEKSTNQSNENDQSSLSQHNEKPG) is disordered. The span at 503–519 (EKSTNQSNENDQSSLSQ) shows a compositional bias: polar residues. ATP is bound by residues Lys561, Arg606, Thr673, Gly674, Asp675, Arg732, and Lys738. Asp757 is a Mg(2+) binding site. Asn760 serves as a coordination point for ATP. A helical transmembrane segment spans residues 816–836 (VLQLLAENVAQALYLIIGLVF). Topologically, residues 837–848 (RDENGKSVFPLS) are extracellular. Residues 849-869 (PVEVLWIIVVTSCFPAMGLGL) form a helical membrane-spanning segment. Topologically, residues 870–885 (EKAAPDLMDRPPHDSE) are cytoplasmic. Residues 886–906 (VGIFTWEVIIDTFAYGIIMTG) form a helical membrane-spanning segment. The Extracellular portion of the chain corresponds to 907-943 (SCMASFTGSLYGINSGRLGHDCDGTYNSSCRDVYRSR). Residues 944–964 (SAAFATMTWCALILAWEVVDM) form a helical membrane-spanning segment. Residues 965–991 (RRSFFRMHPDTDSPVKEFFRSIWGNQF) are Cytoplasmic-facing. Residues 992–1012 (LFWSIIFGFVSAFPVVYIPVI) traverse the membrane as a helical segment. Residues 1013–1021 (NDKVFLHKP) lie on the Extracellular side of the membrane. The chain crosses the membrane as a helical span at residues 1022–1042 (IGAEWGLAIAFTIAFWIGAEL). The Cytoplasmic segment spans residues 1043-1091 (YKCGKRRYFKTQRAHNPENDLESNNKRDPFEAYSTSTTIHTEVNIGIKQ).

Belongs to the cation transport ATPase (P-type) (TC 3.A.3) family. Type IID subfamily. Mg(2+) serves as cofactor. Post-translationally, the active site is phosphorylated in presence of sodium or potassium and in conditions of higher pH. Not phosphorylated in presence of calcium ions.

It is found in the cell membrane. The enzyme catalyses Na(+)(in) + ATP + H2O = Na(+)(out) + ADP + phosphate + H(+). It catalyses the reaction K(+)(in) + ATP + H2O = K(+)(out) + ADP + phosphate + H(+). Functionally, catalyzes the hydrolysis of ATP coupled with the export of sodium and potassium from the cell. May export potassium less efficiently. May transport other cations such as lithium. Sodium/potassium efflux ATPases are involved in salt tolerance and maintaining the membrane potential across the plasma membrane in high salinity (Na+) or alkaline (K+) environments. Is negatively modulated by SIS2/HAL3. The protein is Sodium/potassium exporting P-type ATPase 1 of Saccharomyces cerevisiae (strain ATCC 204508 / S288c) (Baker's yeast).